Reading from the N-terminus, the 128-residue chain is Aspartate 1-decarboxylase (128 aa).

Ser-25 (schiff-base intermediate with substrate; via pyruvic acid) is an active-site residue. Ser-25 is subject to Pyruvic acid (Ser). Thr-57 is a binding site for substrate. The active-site Proton donor is the Tyr-58. A substrate-binding site is contributed by 73-75 (GAA).

It belongs to the PanD family. As to quaternary structure, heterooctamer of four alpha and four beta subunits. Pyruvate serves as cofactor. Post-translationally, is synthesized initially as an inactive proenzyme, which is activated by self-cleavage at a specific serine bond to produce a beta-subunit with a hydroxyl group at its C-terminus and an alpha-subunit with a pyruvoyl group at its N-terminus.

Its subcellular location is the cytoplasm. It carries out the reaction L-aspartate + H(+) = beta-alanine + CO2. The protein operates within cofactor biosynthesis; (R)-pantothenate biosynthesis; beta-alanine from L-aspartate: step 1/1. Its function is as follows. Catalyzes the pyruvoyl-dependent decarboxylation of aspartate to produce beta-alanine. This Caldicellulosiruptor bescii (strain ATCC BAA-1888 / DSM 6725 / KCTC 15123 / Z-1320) (Anaerocellum thermophilum) protein is Aspartate 1-decarboxylase.